The primary structure comprises 316 residues: Protein U25 (316 aa).

It belongs to the herpesviridae US22 family.

The sequence is that of Protein U25 (U25) from Human herpesvirus 6B (HHV-6 variant B).